A 163-amino-acid polypeptide reads, in one-letter code: uncharacterized protein (163 aa).

Belongs to the LcrH/SycD chaperone family.

This is an uncharacterized protein from Escherichia coli (strain K12).